The sequence spans 450 residues: mRNA cleavage and polyadenylation factor CLP1 (450 aa).

ATP-binding positions include Glu-29, Lys-67, and 137–142 (NSGKTS).

This sequence belongs to the Clp1 family. Clp1 subfamily. In terms of assembly, component of a pre-mRNA cleavage factor complex. Interacts directly with PCF11.

The protein resides in the nucleus. In terms of biological role, required for endonucleolytic cleavage during polyadenylation-dependent pre-mRNA 3'-end formation. In Yarrowia lipolytica (strain CLIB 122 / E 150) (Yeast), this protein is mRNA cleavage and polyadenylation factor CLP1.